The chain runs to 442 residues: tRNA-2-methylthio-N(6)-dimethylallyladenosine synthase (442 aa).

The 118-residue stretch at 3-120 folds into the MTTase N-terminal domain; that stretch reads NKLYIRTFGC…LPNMLNDALN (118 aa). Residues C12, C49, C83, C157, C161, and C164 each contribute to the [4Fe-4S] cluster site. The Radical SAM core domain occupies 143–375; the sequence is RTNSVTAFVS…QKTINNNTEH (233 aa). One can recognise a TRAM domain in the interval 378-440; the sequence is QLMIGSIQKV…GNSLMGDLLT (63 aa).

It belongs to the methylthiotransferase family. MiaB subfamily. In terms of assembly, monomer. Requires [4Fe-4S] cluster as cofactor.

It localises to the cytoplasm. It carries out the reaction N(6)-dimethylallyladenosine(37) in tRNA + (sulfur carrier)-SH + AH2 + 2 S-adenosyl-L-methionine = 2-methylsulfanyl-N(6)-dimethylallyladenosine(37) in tRNA + (sulfur carrier)-H + 5'-deoxyadenosine + L-methionine + A + S-adenosyl-L-homocysteine + 2 H(+). Functionally, catalyzes the methylthiolation of N6-(dimethylallyl)adenosine (i(6)A), leading to the formation of 2-methylthio-N6-(dimethylallyl)adenosine (ms(2)i(6)A) at position 37 in tRNAs that read codons beginning with uridine. The protein is tRNA-2-methylthio-N(6)-dimethylallyladenosine synthase of Vesicomyosocius okutanii subsp. Calyptogena okutanii (strain HA).